Here is a 110-residue protein sequence, read N- to C-terminus: Parvalbumin alpha (110 aa).

2 consecutive EF-hand domains span residues 39–74 and 78–110; these read KGPD…FTPN and LSVK…VSES. Ca(2+) is bound by residues aspartate 52, aspartate 54, serine 56, phenylalanine 58, glutamate 60, glutamate 63, aspartate 91, aspartate 93, aspartate 95, lysine 97, and glutamate 102.

Belongs to the parvalbumin family.

Its function is as follows. In muscle, parvalbumin is thought to be involved in relaxation after contraction. It binds two calcium ions. The sequence is that of Parvalbumin alpha from Aquarana catesbeiana (American bullfrog).